The sequence spans 99 residues: Transmembrane protein 14A (99 aa).

Transmembrane regions (helical) follow at residues 1-21 (MDLI…FGYK), 24-44 (GGVP…YGAY), and 79-99 (PAGL…LLLL).

Belongs to the TMEM14 family. As to expression, expressed at significantly higher levels in ovarian cancer tissues than in normal tissues (at protein level).

Its subcellular location is the mitochondrion membrane. The protein localises to the endoplasmic reticulum membrane. In terms of biological role, inhibits apoptosis via negative regulation of the mitochondrial outer membrane permeabilization involved in apoptotic signaling pathway. The protein is Transmembrane protein 14A (TMEM14A) of Homo sapiens (Human).